We begin with the raw amino-acid sequence, 145 residues long: Ubiquitin-conjugating enzyme E2 variant 1C (145 aa).

In terms of domain architecture, UBC core spans 12–145 (PRNFRLLEEL…LVQPPEGTFF (134 aa)).

Belongs to the ubiquitin-conjugating enzyme family. As to quaternary structure, heterodimer with UBC35 or UBC36. As to expression, expressed in roots, shoots, leaves, stems and flowers, but not in pollen.

Has no ubiquitin ligase activity on its own. The heterodimer with UBC catalyzes the synthesis of non-canonical poly-ubiquitin chains that are linked through 'Lys-63'. This type of poly-ubiquitination does not lead to protein degradation by the proteasome. Mediates transcriptional activation of target genes. May play a role in the control of progress through the cell cycle and differentiation. May play a role in the error-free DNA repair pathway and contributes to the survival of cells after DNA damage. The chain is Ubiquitin-conjugating enzyme E2 variant 1C (UEV1C) from Arabidopsis thaliana (Mouse-ear cress).